Here is a 248-residue protein sequence, read N- to C-terminus: 4-hydroxy-tetrahydrodipicolinate reductase (248 aa).

NAD(+) contacts are provided by residues Asp32, 74-76 (GTT), and 99-102 (SANF). His134 serves as the catalytic Proton donor/acceptor. His135 contributes to the (S)-2,3,4,5-tetrahydrodipicolinate binding site. The active-site Proton donor is the Lys138. Residue 144–145 (GT) coordinates (S)-2,3,4,5-tetrahydrodipicolinate.

It belongs to the DapB family.

Its subcellular location is the cytoplasm. The enzyme catalyses (S)-2,3,4,5-tetrahydrodipicolinate + NAD(+) + H2O = (2S,4S)-4-hydroxy-2,3,4,5-tetrahydrodipicolinate + NADH + H(+). The catalysed reaction is (S)-2,3,4,5-tetrahydrodipicolinate + NADP(+) + H2O = (2S,4S)-4-hydroxy-2,3,4,5-tetrahydrodipicolinate + NADPH + H(+). The protein operates within amino-acid biosynthesis; L-lysine biosynthesis via DAP pathway; (S)-tetrahydrodipicolinate from L-aspartate: step 4/4. In terms of biological role, catalyzes the conversion of 4-hydroxy-tetrahydrodipicolinate (HTPA) to tetrahydrodipicolinate. This chain is 4-hydroxy-tetrahydrodipicolinate reductase, found in Chlorobium luteolum (strain DSM 273 / BCRC 81028 / 2530) (Pelodictyon luteolum).